The sequence spans 118 residues: Phosphoribosyl-AMP cyclohydrolase (118 aa).

Asp-87 contacts Mg(2+). Cys-88 contributes to the Zn(2+) binding site. Mg(2+) is bound by residues Asp-89 and Asp-91. Residues Cys-104 and Cys-111 each coordinate Zn(2+).

This sequence belongs to the PRA-CH family. In terms of assembly, homodimer. Mg(2+) is required as a cofactor. Zn(2+) serves as cofactor.

It localises to the cytoplasm. The enzyme catalyses 1-(5-phospho-beta-D-ribosyl)-5'-AMP + H2O = 1-(5-phospho-beta-D-ribosyl)-5-[(5-phospho-beta-D-ribosylamino)methylideneamino]imidazole-4-carboxamide. The protein operates within amino-acid biosynthesis; L-histidine biosynthesis; L-histidine from 5-phospho-alpha-D-ribose 1-diphosphate: step 3/9. Catalyzes the hydrolysis of the adenine ring of phosphoribosyl-AMP. This Corynebacterium glutamicum (strain ATCC 13032 / DSM 20300 / JCM 1318 / BCRC 11384 / CCUG 27702 / LMG 3730 / NBRC 12168 / NCIMB 10025 / NRRL B-2784 / 534) protein is Phosphoribosyl-AMP cyclohydrolase.